Here is a 600-residue protein sequence, read N- to C-terminus: Aspartate--tRNA(Asp/Asn) ligase (600 aa).

Residue E187 coordinates L-aspartate. Residues Q211 to K214 are aspartate. L-aspartate is bound by residues R233 and H463. R233–E235 is a binding site for ATP. Position 497 (E497) interacts with ATP. R504 serves as a coordination point for L-aspartate. Residue G549–R552 participates in ATP binding.

It belongs to the class-II aminoacyl-tRNA synthetase family. Type 1 subfamily. Homodimer.

Its subcellular location is the cytoplasm. It catalyses the reaction tRNA(Asx) + L-aspartate + ATP = L-aspartyl-tRNA(Asx) + AMP + diphosphate. Aspartyl-tRNA synthetase with relaxed tRNA specificity since it is able to aspartylate not only its cognate tRNA(Asp) but also tRNA(Asn). Reaction proceeds in two steps: L-aspartate is first activated by ATP to form Asp-AMP and then transferred to the acceptor end of tRNA(Asp/Asn). The sequence is that of Aspartate--tRNA(Asp/Asn) ligase from Wolbachia sp. subsp. Brugia malayi (strain TRS).